A 128-amino-acid chain; its full sequence is Translation initiation factor 5A (128 aa).

Lys-35 carries the hypusine modification.

Belongs to the eIF-5A family.

The protein resides in the cytoplasm. Its function is as follows. Functions by promoting the formation of the first peptide bond. This Methanosarcina mazei (strain ATCC BAA-159 / DSM 3647 / Goe1 / Go1 / JCM 11833 / OCM 88) (Methanosarcina frisia) protein is Translation initiation factor 5A (eif5a).